We begin with the raw amino-acid sequence, 216 residues long: Pyridoxine/pyridoxamine 5'-phosphate oxidase (216 aa).

Residues 12 to 15 (RREY) and K70 contribute to the substrate site. Residues 65-70 (RLVLLK), 80-81 (YT), R86, K87, and Q109 contribute to the FMN site. Substrate-binding residues include Y127, R131, and S135. FMN is bound by residues 144–145 (QS) and W189. A substrate-binding site is contributed by 195 to 197 (RMH). R199 contacts FMN.

It belongs to the pyridoxamine 5'-phosphate oxidase family. As to quaternary structure, homodimer. FMN serves as cofactor.

The catalysed reaction is pyridoxamine 5'-phosphate + O2 + H2O = pyridoxal 5'-phosphate + H2O2 + NH4(+). It catalyses the reaction pyridoxine 5'-phosphate + O2 = pyridoxal 5'-phosphate + H2O2. The protein operates within cofactor metabolism; pyridoxal 5'-phosphate salvage; pyridoxal 5'-phosphate from pyridoxamine 5'-phosphate: step 1/1. It functions in the pathway cofactor metabolism; pyridoxal 5'-phosphate salvage; pyridoxal 5'-phosphate from pyridoxine 5'-phosphate: step 1/1. Functionally, catalyzes the oxidation of either pyridoxine 5'-phosphate (PNP) or pyridoxamine 5'-phosphate (PMP) into pyridoxal 5'-phosphate (PLP). The sequence is that of Pyridoxine/pyridoxamine 5'-phosphate oxidase from Sodalis glossinidius (strain morsitans).